The sequence spans 350 residues: uncharacterized protein (350 aa).

Disordered stretches follow at residues Met-1–Asn-21, Asn-237–Pro-266, and Glu-278–Thr-298. Polar residues-rich tracts occupy residues Lys-10–Asn-21 and Glu-246–Ser-259. A compositionally biased stretch (basic residues) spans Ser-287–Thr-298.

It is found in the nucleus. This is an uncharacterized protein from Schizosaccharomyces pombe (strain 972 / ATCC 24843) (Fission yeast).